We begin with the raw amino-acid sequence, 262 residues long: Transcription factor Adf-1 (262 aa).

The segment at residues 24–104 (NLIEAVKLNP…QMQFLVDSIR (81 aa)) is a DNA-binding region (MADF). In terms of domain architecture, BESS spans 217-256 (SAEDQSFGMVVTDMLNTLGVRQKAEAKVHIIKYLTDMQLL).

O-glycosylated; contains N-acetylglucosamine side chains.

It is found in the nucleus. In terms of biological role, may play an important role not only in the regulation of Adh expression but also in the transcription of other genes. In Drosophila melanogaster (Fruit fly), this protein is Transcription factor Adf-1 (Adf1).